Reading from the N-terminus, the 288-residue chain is MNNIIDGKALANEILADLKLEIQELTSHTNASPKLAIVLVGDNPASIIYVRNKIKNAHKIGIYTVLINLSATIHTNDLISKINELNLDNEISGIIVQLPLPSSIDKNKILSAVSPSKDIDGFHPLNVGYLHSGISQGFIPCTALGCLAAIKKYEPNLTGKNVVIIGRSNIVGKPLSALLLKENCSVTICHSKTHNLRSITSKADIVVAAIGSPLKLTAEYFNPESIVIDVGINRISSNKIIGDVDFENVQSKVQYITPIPGGIGPMTIAFLLKNTVKAFKDSLYTLDT.

NADP(+) is bound by residues Gly166–Ser168, Ser191, and Ile232.

The protein belongs to the tetrahydrofolate dehydrogenase/cyclohydrolase family. Homodimer.

The enzyme catalyses (6R)-5,10-methylene-5,6,7,8-tetrahydrofolate + NADP(+) = (6R)-5,10-methenyltetrahydrofolate + NADPH. It catalyses the reaction (6R)-5,10-methenyltetrahydrofolate + H2O = (6R)-10-formyltetrahydrofolate + H(+). It functions in the pathway one-carbon metabolism; tetrahydrofolate interconversion. Functionally, catalyzes the oxidation of 5,10-methylenetetrahydrofolate to 5,10-methenyltetrahydrofolate and then the hydrolysis of 5,10-methenyltetrahydrofolate to 10-formyltetrahydrofolate. The chain is Bifunctional protein FolD from Rickettsia peacockii (strain Rustic).